The chain runs to 417 residues: Gamma-glutamyl phosphate reductase (417 aa).

The protein belongs to the gamma-glutamyl phosphate reductase family.

Its subcellular location is the cytoplasm. It catalyses the reaction L-glutamate 5-semialdehyde + phosphate + NADP(+) = L-glutamyl 5-phosphate + NADPH + H(+). It functions in the pathway amino-acid biosynthesis; L-proline biosynthesis; L-glutamate 5-semialdehyde from L-glutamate: step 2/2. In terms of biological role, catalyzes the NADPH-dependent reduction of L-glutamate 5-phosphate into L-glutamate 5-semialdehyde and phosphate. The product spontaneously undergoes cyclization to form 1-pyrroline-5-carboxylate. This is Gamma-glutamyl phosphate reductase from Legionella pneumophila (strain Lens).